A 637-amino-acid chain; its full sequence is Pyrethroid hydrolase (637 aa).

The enzyme catalyses (-)-trans-permethrin + H2O = (3-phenoxyphenyl)methanol + (1S,3R)-3-(2,2-dichlorovinyl)-2,2-dimethylcyclopropanecarboxylate + H(+). Inhibited by Hg(2+), Ag(+) and rho-chloromercuribenzoate. Catalyzes the hydrolysis of pyrethroids pesticides. Hydrolyzes cis-permethrin at approximately equal rate to trans-permethrin. The polypeptide is Pyrethroid hydrolase (estP) (Klebsiella sp).